A 634-amino-acid polypeptide reads, in one-letter code: MSETATQNKETRGFQSEVKQLLHLMIHSLYSNKEIFLRELISNASDAADKLRFQALSNGDLYQGDADLGVKLSFNAEANTLTISDNGIGMSRDNVIEHLGTIAKSGTADFFSKLSEDQSKDSQLIGQFGVGFYSAFIVADAVTVRTRAAGLANDQAVQWHSAGEGDYTIEDITKESRGTDIILHMREDGKEFLNEWRLREVIGKYSDHIGIPVSIFTAVKDDEGKDTEEKHWEQINKAQALWTRNKSDIEKEEYQEFYKHVSHDFADPLTWSHNKVEGKNDYTSLLYIPAKAPWDMMNRDHKSGLKLYVQRVFIMDDAEQFMPSYMRFVRGLIDSNDLPLNVSREILQDNKVTQSLRGACTKRVLTMLERMAKNDNDKYLEFWKEFGLVLKEGPAEDMANKEKIAGLLRFSSTEVDSSEQTIGLASYVERMKEGQDKIYYLTADSYAAAKNSPHLEQFKAKGIEVVLMYDRIDEYVMNYLTDFDGKQFQSITKAGLDLSKFEGEEEKEKQKETEEEFKSVVERTQSYLGGRVKEVRTTFKLATTPAVVVTDDFEMGTQMAKLLEAAGQAAPEVKYIFEINPEHALVKQMADEADEQAFGRWVELLLGQAMLAEKGSMEDPSQFLGAINELLTKR.

Positions 1–344 (MSETATQNKE…SNDLPLNVSR (344 aa)) are a; substrate-binding. Residues 345-561 (EILQDNKVTQ…DFEMGTQMAK (217 aa)) are b. The interval 562–634 (LLEAAGQAAP…GAINELLTKR (73 aa)) is c.

It belongs to the heat shock protein 90 family. Homodimer.

The protein resides in the cytoplasm. Its function is as follows. Molecular chaperone. Has ATPase activity. This chain is Chaperone protein HtpG, found in Vibrio atlanticus (strain LGP32) (Vibrio splendidus (strain Mel32)).